The chain runs to 118 residues: Ig heavy chain V region X24 (118 aa).

Positions 1-111 constitute an Ig-like domain; that stretch reads EVKLLESGGG…GYFDYWGQGT (111 aa).

This chain is Ig heavy chain V region X24, found in Mus musculus (Mouse).